The chain runs to 490 residues: Cytochrome P450 2C7 (490 aa).

Dimethylated arginine is present on R144. Residue C435 participates in heme binding.

This sequence belongs to the cytochrome P450 family. Requires heme as cofactor.

Its subcellular location is the endoplasmic reticulum membrane. It localises to the microsome membrane. It catalyses the reaction an organic molecule + reduced [NADPH--hemoprotein reductase] + O2 = an alcohol + oxidized [NADPH--hemoprotein reductase] + H2O + H(+). In terms of biological role, cytochromes P450 are a group of heme-thiolate monooxygenases. In liver microsomes, this enzyme is involved in an NADPH-dependent electron transport pathway. It oxidizes a variety of structurally unrelated compounds, including steroids, fatty acids, and xenobiotics. The protein is Cytochrome P450 2C7 (Cyp2c7) of Rattus norvegicus (Rat).